A 102-amino-acid chain; its full sequence is ATP-dependent Clp protease adapter protein ClpS (102 aa).

It belongs to the ClpS family. In terms of assembly, binds to the N-terminal domain of the chaperone ClpA.

Functionally, involved in the modulation of the specificity of the ClpAP-mediated ATP-dependent protein degradation. The polypeptide is ATP-dependent Clp protease adapter protein ClpS (Shewanella baltica (strain OS155 / ATCC BAA-1091)).